The following is a 506-amino-acid chain: 2-isopropylmalate synthase (506 aa).

Residues 4 to 266 (ILFMDTTLRD…QSSIILKEIK (263 aa)) enclose the Pyruvate carboxyltransferase domain. Mn(2+)-binding residues include Asp-13, His-201, His-203, and Asn-237. The interval 390–506 (NIKQLQVHFV…KLKALLTLVK (117 aa)) is regulatory domain.

Belongs to the alpha-IPM synthase/homocitrate synthase family. LeuA type 1 subfamily. As to quaternary structure, homodimer. Requires Mn(2+) as cofactor.

Its subcellular location is the cytoplasm. It carries out the reaction 3-methyl-2-oxobutanoate + acetyl-CoA + H2O = (2S)-2-isopropylmalate + CoA + H(+). Its pathway is amino-acid biosynthesis; L-leucine biosynthesis; L-leucine from 3-methyl-2-oxobutanoate: step 1/4. Its function is as follows. Catalyzes the condensation of the acetyl group of acetyl-CoA with 3-methyl-2-oxobutanoate (2-ketoisovalerate) to form 3-carboxy-3-hydroxy-4-methylpentanoate (2-isopropylmalate). This is 2-isopropylmalate synthase from Bacillus cytotoxicus (strain DSM 22905 / CIP 110041 / 391-98 / NVH 391-98).